The primary structure comprises 45 residues: Large ribosomal subunit protein bL34 (45 aa).

This sequence belongs to the bacterial ribosomal protein bL34 family.

The protein is Large ribosomal subunit protein bL34 of Streptomyces avermitilis (strain ATCC 31267 / DSM 46492 / JCM 5070 / NBRC 14893 / NCIMB 12804 / NRRL 8165 / MA-4680).